The sequence spans 489 residues: Betaine aldehyde dehydrogenase (489 aa).

K(+) is bound by residues threonine 26 and aspartate 93. 150-152 contributes to the NAD(+) binding site; that stretch reads GAW. Residue lysine 162 is the Charge relay system of the active site. Position 176–179 (176–179) interacts with NAD(+); that stretch reads KPSE. Isoleucine 180 contacts K(+). 229–232 contacts NAD(+); the sequence is GVET. Position 245 (leucine 245) interacts with K(+). Glutamate 251 (proton acceptor) is an active-site residue. Glycine 253, cysteine 285, and glutamate 386 together coordinate NAD(+). Residue cysteine 285 is the Nucleophile of the active site. Cysteine 285 carries the cysteine sulfenic acid (-SOH) modification. K(+) is bound by residues lysine 456 and glycine 459. The Charge relay system role is filled by glutamate 463.

Belongs to the aldehyde dehydrogenase family. In terms of assembly, dimer of dimers. K(+) is required as a cofactor.

The catalysed reaction is betaine aldehyde + NAD(+) + H2O = glycine betaine + NADH + 2 H(+). Its pathway is amine and polyamine biosynthesis; betaine biosynthesis via choline pathway; betaine from betaine aldehyde: step 1/1. In terms of biological role, involved in the biosynthesis of the osmoprotectant glycine betaine. Catalyzes the irreversible oxidation of betaine aldehyde to the corresponding acid. The chain is Betaine aldehyde dehydrogenase from Paraburkholderia xenovorans (strain LB400).